The following is a 3797-amino-acid chain: A-kinase anchor protein 9 (3797 aa).

Residues 1–140 (MEDEERQRKL…SSEQGAQSSQ (140 aa)) are disordered. Polar residues-rich tracts occupy residues 50-65 (HTDQQSGELCSESSQR) and 92-108 (EISTTADECSSEINGCN). Residues 115–124 (KPTDPLREEE) are compositionally biased toward basic and acidic residues. Phosphoserine is present on S139. Coiled coils occupy residues 140 to 607 (QTCL…LRTQ) and 640 to 976 (IHYK…LLAN). Position 1288 is a phosphoserine (S1288). Disordered regions lie at residues 1643–1668 (STQTQDGHDDQEVEEQTLKDKTLERS), 2323–2343 (VVSTEQQREGARTLPEDEESF), and 2419–2454 (SDNLQPEDAPAQDVTKPLEKQTSLTRLQESPEASRT). Composition is skewed to basic and acidic residues over residues 1648–1668 (DGHDDQEVEEQTLKDKTLERS) and 2328–2343 (QQREGARTLPEDEESF). Residues 1808 to 2377 (SRLQAAVEKL…MTHMNNVLKE (570 aa)) adopt a coiled-coil conformation. Positions 2438 to 2454 (KQTSLTRLQESPEASRT) are enriched in polar residues. A PKA-RII subunit binding domain region spans residues 2498 to 2510 (DLQRSLEKFAAAL). Disordered stretches follow at residues 2604 to 2695 (LEEA…SSSG) and 3271 to 3296 (MEKDRQVHQKTLQTEQEANTQGQKKM). Residues 2606-2615 (EAEERPEEGG) are compositionally biased toward acidic residues. A compositionally biased stretch (basic and acidic residues) spans 2642 to 2669 (PLTEAKEKLSYSLEKEKRTGEQESREAP). Positions 2975–3325 (LQKADRRSLL…QVYKLDLEGK (351 aa)) form a coiled coil. Residues 3279 to 3294 (QKTLQTEQEANTQGQK) are compositionally biased toward polar residues. A phosphoserine mark is found at S3732, S3755, and S3787.

Interacts with the regulatory region of protein kinase N (PKN), protein phosphatase 2A (PP2A), protein phosphatase 1 (PP1) and the immature non-phosphorylated form of PKC epsilon. Interacts with CIP4 and FNBP1. Interacts with chloride intracellular channel proteins CLIC1, CLIC4 and CLIC5. CSNK1D binding promotes its centrosomal subcellular location. Interacts with GM130/GOLGA2; leading to recruitment to the Golgi apparatus. Interacts with KCNQ1; targets protein kinase A (PKA) catalytic and regulatory subunits and protein phosphatase 1 (PP1), to the heterodimer KCNQ1-KCNE1. Interacts with PDE4DIP isoform 2; this interaction stabilizes both proteins. In complex with PDE4DIP isoform 2, recruits CAMSAP2 to the Golgi apparatus. Forms a pericentrosomal complex with CDK5RAP2, EB1/MAPRE1 and PDE4DIP isoform 2; within this complex, MAPRE1 binding to CDK5RAP2 may be mediated by PDE4DIP. Interacts with MAPRE1 and MAPRE3. Interacts (via C-terminus) with CAMSAP2; this interaction is much stronger in the presence of PDE4DIP isoform 2. Interacts with CAMSAP3. Interacts (via C-terminus) with the gamma-tubulin ring complex (gamma-TuRC), composed of gamma-tubulin, TUBGCP2, TUBGCP3, TUBGCP4, TUBGCP5 and TUBGCP6.

It localises to the golgi apparatus. The protein resides in the cytoplasm. It is found in the cytoskeleton. Its subcellular location is the microtubule organizing center. The protein localises to the centrosome. In terms of biological role, scaffolding protein that assembles several protein kinases and phosphatases on the centrosome and Golgi apparatus. Required to maintain the integrity of the Golgi apparatus. Required for microtubule nucleation at the cis-side of the Golgi apparatus. Required for association of the centrosomes with the poles of the bipolar mitotic spindle during metaphase. In complex with PDE4DIP isoform 2/MMG8/SMYLE, recruits CAMSAP2 to the Golgi apparatus and tethers non-centrosomal minus-end microtubules to the Golgi, an important step for polarized cell movement. In complex with PDE4DIP isoform 2, EB1/MAPRE1 and CDK5RAP2, contributes to microtubules nucleation and extension also from the centrosome to the cell periphery. The chain is A-kinase anchor protein 9 (Akap9) from Mus musculus (Mouse).